We begin with the raw amino-acid sequence, 539 residues long: uncharacterized protein (539 aa).

This sequence belongs to the transposase 25 family.

This is an uncharacterized protein from Sinorhizobium fredii (strain NBRC 101917 / NGR234).